Here is a 319-residue protein sequence, read N- to C-terminus: Acetyl-coenzyme A carboxylase carboxyl transferase subunit alpha (319 aa).

Residues 39-296 (EINRLRSKSI…KTQLLLDLTE (258 aa)) enclose the CoA carboxyltransferase C-terminal domain.

It belongs to the AccA family. As to quaternary structure, acetyl-CoA carboxylase is a heterohexamer composed of biotin carboxyl carrier protein (AccB), biotin carboxylase (AccC) and two subunits each of ACCase subunit alpha (AccA) and ACCase subunit beta (AccD).

It is found in the cytoplasm. The enzyme catalyses N(6)-carboxybiotinyl-L-lysyl-[protein] + acetyl-CoA = N(6)-biotinyl-L-lysyl-[protein] + malonyl-CoA. Its pathway is lipid metabolism; malonyl-CoA biosynthesis; malonyl-CoA from acetyl-CoA: step 1/1. Functionally, component of the acetyl coenzyme A carboxylase (ACC) complex. First, biotin carboxylase catalyzes the carboxylation of biotin on its carrier protein (BCCP) and then the CO(2) group is transferred by the carboxyltransferase to acetyl-CoA to form malonyl-CoA. In Blochmanniella pennsylvanica (strain BPEN), this protein is Acetyl-coenzyme A carboxylase carboxyl transferase subunit alpha.